A 65-amino-acid polypeptide reads, in one-letter code: uncharacterized protein (65 aa).

This is an uncharacterized protein from Rickettsia conorii (strain ATCC VR-613 / Malish 7).